A 294-amino-acid polypeptide reads, in one-letter code: Aspartate carbamoyltransferase catalytic subunit (294 aa).

Positions 49 and 50 each coordinate carbamoyl phosphate. L-aspartate is bound at residue Lys77. Carbamoyl phosphate is bound by residues Arg99, His127, and Gln130. Residues Arg161 and Arg211 each coordinate L-aspartate. Carbamoyl phosphate contacts are provided by Gly250 and Pro251.

The protein belongs to the aspartate/ornithine carbamoyltransferase superfamily. ATCase family. In terms of assembly, heterododecamer (2C3:3R2) of six catalytic PyrB chains organized as two trimers (C3), and six regulatory PyrI chains organized as three dimers (R2).

It catalyses the reaction carbamoyl phosphate + L-aspartate = N-carbamoyl-L-aspartate + phosphate + H(+). It participates in pyrimidine metabolism; UMP biosynthesis via de novo pathway; (S)-dihydroorotate from bicarbonate: step 2/3. Catalyzes the condensation of carbamoyl phosphate and aspartate to form carbamoyl aspartate and inorganic phosphate, the committed step in the de novo pyrimidine nucleotide biosynthesis pathway. This Sulfurovum sp. (strain NBC37-1) protein is Aspartate carbamoyltransferase catalytic subunit.